A 460-amino-acid chain; its full sequence is DEAD-box helicase Dbp80 (460 aa).

Serine 26 carries the phosphoserine modification. Threonine 30 is modified (phosphothreonine). Residues 73-101 (KTFEALHLKASLLKGIYAMGFNTPSKIQE) carry the Q motif motif. The Helicase ATP-binding domain occupies 106 to 276 (TLLADPPQNM…RLIVADPTII (171 aa)). Position 119–126 (119–126 (SQSGTGKT)) interacts with ATP. A DEAD box motif is present at residues 223-226 (DEAD). Positions 287 to 455 (NIKQYYVKCK…VLNTDSADDI (169 aa)) constitute a Helicase C-terminal domain.

The protein belongs to the DEAD box helicase family. DDX19/DBP5 subfamily.

It localises to the cytoplasm. It is found in the nucleus. The protein resides in the nucleoplasm. It carries out the reaction ATP + H2O = ADP + phosphate + H(+). ATP-dependent RNA helicase involved in mRNA export from the nucleus. This chain is DEAD-box helicase Dbp80 (Dbp80), found in Drosophila melanogaster (Fruit fly).